Consider the following 328-residue polypeptide: Bcl-2/adenovirus E1B 19 kDa-interacting protein 2-like protein (328 aa).

A compositionally biased stretch (basic and acidic residues) spans 1–22; that stretch reads MKLGELELREEWQDEEFPRLLP. Positions 1–116 are disordered; the sequence is MKLGELELRE…DSGHEFEWED (116 aa). A compositionally biased stretch (polar residues) spans 36 to 45; the sequence is RGSQAGTPSS. A compositionally biased stretch (low complexity) spans 76–89; it reads ASPTRSASSSSAGS. Residues 92 to 105 are compositionally biased toward acidic residues; the sequence is LEVDELETPSDSEQ. The segment covering 107–116 has biased composition (basic and acidic residues); the sequence is DSGHEFEWED. The region spanning 162–323 is the CRAL-TRIO domain; it reads DMTIIEPYKK…VVRQLDRDLH (162 aa).

As to quaternary structure, homodimer. Interacts with BCL2, ARHGAP1, MIF and GFER.

In terms of biological role, may be a bridge molecule between BCL2 and ARHGAP1/CDC42 in promoting cell death. The chain is Bcl-2/adenovirus E1B 19 kDa-interacting protein 2-like protein (Bnipl) from Mus musculus (Mouse).